We begin with the raw amino-acid sequence, 178 residues long: Large ribosomal subunit protein uL6 (178 aa).

Belongs to the universal ribosomal protein uL6 family. As to quaternary structure, part of the 50S ribosomal subunit.

Its function is as follows. This protein binds to the 23S rRNA, and is important in its secondary structure. It is located near the subunit interface in the base of the L7/L12 stalk, and near the tRNA binding site of the peptidyltransferase center. This chain is Large ribosomal subunit protein uL6, found in Oenococcus oeni (strain ATCC BAA-331 / PSU-1).